Reading from the N-terminus, the 1771-residue chain is MSVLISQSVINYVEEENIPALKALLEKCKDVDERNECGQTPLMIAAEQGNLEIVKELIKNGANCNLEDLDNWTALISASKEGHVHIVEELLKCGVNLEHRDMGGWTALMWACYKGRTDVVELLLSHGANPSVTGLYSVYPIIWAAGRGHADIVHLLLQNGAKVNCSDKYGTTPLVWAARKGHLECVKHLLAMGADVDQEGANSMTALIVAVKGGYTQSVKEILKRNPNVNLTDKDGNTALMIASKEGHTEIVQDLLDAGTYVNIPDRSGDTVLIGAVRGGHVEIVRALLQKYADIDIRGQDNKTALYWAVEKGNATMVRDILQCNPDTEICTKDGETPLIKATKMRNIEVVELLLDKGAKVSAVDKKGDTPLHIAIRGRSRKLAELLLRNPKDGRLLYRPNKAGETPYNIDCSHQKSILTQIFGARHLSPTETDGDMLGYDLYSSALADILSEPTMQPPICVGLYAQWGSGKSFLLKKLEDEMKTFAGQQIEPLFQFSWLIVFLTLLLCGGLGLLFAFTVHPNLGIAVSLSFLALLYIFFIVIYFGGRREGESWNWAWVLSTRLARHIGYLELLLKLMFVNPPELPEQTTKALPVRFLFTDYNRLSSVGGETSLAEMIATLSDACEREFGFLATRLFRVFKTEDTQGKKKWKKTCCLPSFVIFLFIIGCIISGITLLAIFRVDPKHLTVNAVLISIASVVGLAFVLNCRTWWQVLDSLLNSQRKRLHNAASKLHKLKSEGFMKVLKCEVELMARMAKTIDSFTQNQTRLVVIIDGLDACEQDKVLQMLDTVRVLFSKGPFIAIFASDPHIIIKAINQNLNSVLRDSNINGHDYMRNIVHLPVFLNSRGLSNARKFLVTSATNGDVPCSDTTGIQEDADRRVSQNSLGEMTKLGSKTALNRRDTYRRRQMQRTITRQMSFDLTKLLVTEDWFSDISPQTMRRLLNIVSVTGRLLRANQISFNWDRLASWINLTEQWPYRTSWLILYLEETEGIPDQMTLKTIYERISKNIPTTKDVEPLLEIDGDIRNFEVFLSSRTPVLVARDVKVFLPCTVNLDPKLREIIADVRAAREQISIGGLAYPPLPLHEGPPRAPSGYSQPPSVCSSTSFNGPFAGGVVSPQPHSSYYSGMTGPQHPFYNRPFFAPYLYTPRYYPGGSQHLISRPSVKTSLPRDQNNGLEVIKEDAAEGLSSPTDSSRGSGPAPGPVVLLNSLNVDAVCEKLKQIEGLDQSMLPQYCTTIKKANINGRVLAQCNIDELKKEMNMNFGDWHLFRSTVLEMRNAESHVVPEDPRFLSESSSGPAPHGEPARRASHNELPHTELSSQTPYTLNFSFEELNTLGLDEGAPRHSNLSWQSQTRRTPSLSSLNSQDSSIEISKLTDKVQAEYRDAYREYIAQMSQLEGGPGSTTISGRSSPHSTYYMGQSSSGGSIHSNLEQEKGKDSEPKPDDGRKSFLMKRGDVIDYSSSGVSTNDASPLDPITEEDEKSDQSGSKLLPGKKSSERSSLFQTDLKLKGSGLRYQKLPSDEDESGTEESDNTPLLKDDKDRKAEGKVERVPKSPEHSAEPIRTFIKAKEYLSDALLDKKDSSDSGVRSSESSPNHSLHNEVADDSQLEKANLIELEDDSHSGKRGIPHSLSGLQDPIIARMSICSEDKKSPSECSLIASSPEENWPACQKAYNLNRTPSTVTLNNNSAPANRANQNFDEMEGIRETSQVILRPSSSPNPTTIQNENLKSMTHKRSQRSSYTRLSKDPPELHAAASSESTGFGEERESIL.

Over 1-499 (MSVLISQSVI…QIEPLFQFSW (499 aa)) the chain is Cytoplasmic. ANK repeat units lie at residues 4 to 33 (LISQSVINYVEEENIPALKALLEKCKDVDE), 37 to 66 (CGQTPLMIAAEQGNLEIVKELIKNGANCNL), 70 to 99 (DNWTALISASKEGHVHIVEELLKCGVNLEH), 103 to 132 (GGWTALMWACYKGRTDVVELLLSHGANPSV), 136 to 165 (YSVYPIIWAAGRGHADIVHLLLQNGAKVNC), 169 to 198 (YGTTPLVWAARKGHLECVKHLLAMGADVDQ), 202 to 231 (NSMTALIVAVKGGYTQSVKEILKRNPNVNL), 235 to 264 (DGNTALMIASKEGHTEIVQDLLDAGTYVNI), 268 to 297 (SGDTVLIGAVRGGHVEIVRALLQKYADIDI), 301 to 330 (DNKTALYWAVEKGNATMVRDILQCNPDTEI), 334 to 363 (DGETPLIKATKMRNIEVVELLLDKGAKVSA), and 367 to 396 (KGDTPLHIAIRGRSRKLAELLLRNPKDGRL). The 514-residue stretch at 440–953 (YDLYSSALAD…NIVSVTGRLL (514 aa)) folds into the KAP NTPase domain. Residues 500–520 (LIVFLTLLLCGGLGLLFAFTV) form a helical membrane-spanning segment. Topologically, residues 521 to 524 (HPNL) are extracellular. The chain crosses the membrane as a helical span at residues 525 to 545 (GIAVSLSFLALLYIFFIVIYF). Residues 546-659 (GGRREGESWN…KWKKTCCLPS (114 aa)) lie on the Cytoplasmic side of the membrane. Residues 660–680 (FVIFLFIIGCIISGITLLAIF) traverse the membrane as a helical segment. The Extracellular segment spans residues 681–685 (RVDPK). Residues 686–706 (HLTVNAVLISIASVVGLAFVL) form a helical membrane-spanning segment. Topologically, residues 707–1771 (NCRTWWQVLD…GFGEERESIL (1065 aa)) are cytoplasmic. A phosphoserine mark is found at serine 882 and serine 885. Threonine 914 carries the post-translational modification Phosphothreonine. Serine 918 is modified (phosphoserine). The mediates interaction with CRKL stretch occupies residues 1089–1092 (PRAP). Serine 1163 bears the Phosphoserine mark. Disordered stretches follow at residues 1182-1202 (DAAEGLSSPTDSSRGSGPAPG), 1285-1310 (PEDPRFLSESSSGPAPHGEPARRASH), 1344-1368 (RHSNLSWQSQTRRTPSLSSLNSQDS), and 1397-1564 (LEGG…EPIR). 6 positions are modified to phosphoserine: serine 1296, serine 1352, serine 1359, serine 1361, serine 1362, and serine 1365. Residues 1346-1358 (SNLSWQSQTRRTP) are compositionally biased toward polar residues. A compositionally biased stretch (low complexity) spans 1359-1368 (SLSSLNSQDS). Residues 1403 to 1430 (STTISGRSSPHSTYYMGQSSSGGSIHSN) are compositionally biased toward polar residues. The span at 1431–1457 (LEQEKGKDSEPKPDDGRKSFLMKRGDV) shows a compositional bias: basic and acidic residues. Positions 1460 to 1470 (YSSSGVSTNDA) are enriched in polar residues. A phosphoserine mark is found at serine 1521, serine 1526, serine 1555, and serine 1574. Over residues 1522–1532 (DEDESGTEESD) the composition is skewed to acidic residues. Basic and acidic residues predominate over residues 1537 to 1561 (LKDDKDRKAEGKVERVPKSPEHSAE). The disordered stretch occupies residues 1578–1633 (LDKKDSSDSGVRSSESSPNHSLHNEVADDSQLEKANLIELEDDSHSGKRGIPHSLS). Over residues 1585–1594 (DSGVRSSESS) the composition is skewed to low complexity. Phosphoserine is present on residues serine 1623 and serine 1633. Residue threonine 1679 is modified to Phosphothreonine. Position 1681 is a phosphoserine (serine 1681). Threonine 1684 carries the post-translational modification Phosphothreonine. Residues 1713 to 1731 (LRPSSSPNPTTIQNENLKS) are compositionally biased toward polar residues. The disordered stretch occupies residues 1713 to 1771 (LRPSSSPNPTTIQNENLKSMTHKRSQRSSYTRLSKDPPELHAAASSESTGFGEERESIL). The short motif at 1766 to 1771 (ERESIL) is the PDZ-binding element.

In terms of assembly, found in a complex, at least composed of KIDINS220, MAGI2, NTRK1 and RAPGEF2; the complex is mainly formed at late endosomes in a nerve growth factor (NGF)-dependent manner. Interacts with RAPGEF2; the interaction is strengthened after NGF stimulation. Isoform 2 interacts (via C-terminal domain) with MAGI2 isoform 1 (via PDZ domain). Interacts with NTRK1, NTRK2, NTRK3, ERKL and NGFR. Can form a ternary complex with NGFR and NTRK1 and this complex is affected by the expression levels of KIDINS220/ARMS. An increase in KIDINS220/ARMS expression leads to a decreased association of NGFR and NTRK1. Interacts (via PDZ-binding motif) with SNTA1 and SNTB2 (via PDZ domains). Interacts with EPHA4 and PRKD1. In terms of processing, tyrosine phosphorylated by NTRK1, NTRK2, EPHB2 and EPHA4. Phosphorylation at Ser-918 is induced by phorbol ester treatment. Phosphorylation by NTRK2 is induced by brain-derived neurotrophic factor (BDNF) and neurotrophin-4/5. Phosphorylation by NTRK1 is induced by nerve growth factor (NGF). In terms of tissue distribution, abundant in developing and adult neural tissues as well as neuroendocrine cells and dendritic cells. Overexpressed in melanoma and melanoma cell lines.

It localises to the membrane. The protein resides in the late endosome. In terms of biological role, promotes a prolonged MAP-kinase signaling by neurotrophins through activation of a Rap1-dependent mechanism. Provides a docking site for the CRKL-C3G complex, resulting in Rap1-dependent sustained ERK activation. May play an important role in regulating postsynaptic signal transduction through the syntrophin-mediated localization of receptor tyrosine kinases such as EPHA4. In cooperation with SNTA1 can enhance EPHA4-induced JAK/STAT activation. Plays a role in nerve growth factor (NGF)-induced recruitment of RAPGEF2 to late endosomes and neurite outgrowth. May play a role in neurotrophin- and ephrin-mediated neuronal outgrowth and in axon guidance during neural development and in neuronal regeneration. Modulates stress-induced apoptosis of melanoma cells via regulation of the MEK/ERK signaling pathway. This is Kinase D-interacting substrate of 220 kDa (KIDINS220) from Homo sapiens (Human).